The chain runs to 434 residues: Trigger factor (434 aa).

The PPIase FKBP-type domain maps to 161–246 (EDRATLDFTG…LKKVEVRELP (86 aa)).

The protein belongs to the FKBP-type PPIase family. Tig subfamily.

Its subcellular location is the cytoplasm. The enzyme catalyses [protein]-peptidylproline (omega=180) = [protein]-peptidylproline (omega=0). In terms of biological role, involved in protein export. Acts as a chaperone by maintaining the newly synthesized protein in an open conformation. Functions as a peptidyl-prolyl cis-trans isomerase. This chain is Trigger factor, found in Yersinia enterocolitica serotype O:8 / biotype 1B (strain NCTC 13174 / 8081).